The chain runs to 80 residues: Large ribosomal subunit protein eL20 (80 aa).

Belongs to the eukaryotic ribosomal protein eL20 family. In terms of assembly, part of the 50S ribosomal subunit. Binds 23S rRNA.

The protein is Large ribosomal subunit protein eL20 of Methanopyrus kandleri (strain AV19 / DSM 6324 / JCM 9639 / NBRC 100938).